A 425-amino-acid polypeptide reads, in one-letter code: Monoacylglycerol lipase ABHD2 (425 aa).

At 1-9 the chain is on the cytoplasmic side; the sequence is MNAMLETPE. Residues 10–30 traverse the membrane as a helical; Signal-anchor for type II membrane protein segment; sequence LPAVFDGVKLAAVAAVLYVIV. Residues 31–425 are Extracellular-facing; sequence RCLNLKSPTA…DTEQVEADLE (395 aa). The AB hydrolase-1 domain occupies 128 to 382; sequence MVICPGIANH…HGGHLGFFEG (255 aa). Asparagine 136 carries an N-linked (GlcNAc...) asparagine glycan. Serine 207 serves as the catalytic Nucleophile. Catalysis depends on charge relay system residues aspartate 345 and histidine 376. An N-linked (GlcNAc...) asparagine glycan is attached at asparagine 410.

Belongs to the AB hydrolase superfamily. AB hydrolase 4 family.

The protein localises to the cell membrane. It catalyses the reaction Hydrolyzes glycerol monoesters of long-chain fatty acids.. It carries out the reaction an acetyl ester + H2O = an aliphatic alcohol + acetate + H(+). The catalysed reaction is a triacylglycerol + H2O = a diacylglycerol + a fatty acid + H(+). The enzyme catalyses 2-(5Z,8Z,11Z,14Z-eicosatetraenoyl)-glycerol + H2O = glycerol + (5Z,8Z,11Z,14Z)-eicosatetraenoate + H(+). It catalyses the reaction a butanoate ester + H2O = an aliphatic alcohol + butanoate + H(+). It carries out the reaction hexadecanoate ester + H2O = an aliphatic alcohol + hexadecanoate + H(+). Acylglycerol lipase activity is activated upon binding to progesterone. In terms of biological role, progesterone-dependent acylglycerol lipase that catalyzes hydrolysis of endocannabinoid arachidonoylglycerol (AG) from cell membrane. Acts as a progesterone receptor: progesterone-binding activates the acylglycerol lipase activity, mediating degradation of 1-arachidonoylglycerol (1AG) and 2-arachidonoylglycerol (2AG) to glycerol and arachidonic acid (AA). Also displays an ester hydrolase activity against acetyl ester, butanoate ester and hexadecanoate ester. Plays a key role in sperm capacitation in response to progesterone by mediating degradation of 2AG, an inhibitor of the sperm calcium channel CatSper, leading to calcium influx via CatSper and sperm activation. May also play a role in smooth muscle cells migration. This chain is Monoacylglycerol lipase ABHD2 (ABHD2), found in Macaca fascicularis (Crab-eating macaque).